Consider the following 1234-residue polypeptide: ATP-dependent helicase/nuclease subunit A (1234 aa).

In terms of domain architecture, UvrD-like helicase ATP-binding spans 2-475 (TQFTTSQQAA…IILAENFRST (474 aa)). Residue 23–30 (ASAGSGKT) coordinates ATP. The UvrD-like helicase C-terminal domain occupies 507-806 (YGALDYGDAH…KLMTIHKSKG (300 aa)).

The protein belongs to the helicase family. AddA subfamily. As to quaternary structure, heterodimer of AddA and AddB/RexB. It depends on Mg(2+) as a cofactor.

The catalysed reaction is Couples ATP hydrolysis with the unwinding of duplex DNA by translocating in the 3'-5' direction.. The enzyme catalyses ATP + H2O = ADP + phosphate + H(+). In terms of biological role, the heterodimer acts as both an ATP-dependent DNA helicase and an ATP-dependent, dual-direction single-stranded exonuclease. Recognizes the chi site generating a DNA molecule suitable for the initiation of homologous recombination. The AddA nuclease domain is required for chi fragment generation; this subunit has the helicase and 3' -&gt; 5' nuclease activities. The protein is ATP-dependent helicase/nuclease subunit A of Lacticaseibacillus paracasei (strain ATCC 334 / BCRC 17002 / CCUG 31169 / CIP 107868 / KCTC 3260 / NRRL B-441) (Lactobacillus paracasei).